The primary structure comprises 598 residues: uncharacterized protein (598 aa).

In terms of domain architecture, ABC transmembrane type-1 spans 39-322 (LIMVFVFVTV…LSNQFNMIQM (284 aa)). 5 consecutive transmembrane segments (helical) span residues 40-60 (IMVFVFVTVSSILGVLSPYLI), 80-100 (MLILGTIYALTSLLFWLQGKI), 150-170 (VLGNSIIQFFSGIVTLAGAVI), 177-197 (VILSLVTLSIVPLTVLITQIV), and 273-293 (LGFALISGFGGWLALKDIITV). In terms of domain architecture, ABC transporter spans 355–589 (IEFKNVWFSY…RGFYYELFTS (235 aa)). Position 388–395 (388–395 (GPTGSGKT)) interacts with ATP.

This sequence belongs to the ABC transporter superfamily.

It localises to the cell membrane. This is an uncharacterized protein from Thermotoga maritima (strain ATCC 43589 / DSM 3109 / JCM 10099 / NBRC 100826 / MSB8).